Consider the following 1050-residue polypeptide: Elongation factor 3 (1050 aa).

The ADP site is built by Val43 and His45. The stretch at 46–83 (DVPVEFFEDLKKQIQSKDAKVSLAALDAYKHIASTNGL) is one HEAT 1 repeat. Ser86 contributes to the ADP binding site. HEAT repeat units follow at residues 89–126 (PYVV…AITP), 127–165 (TAVK…TAKA), 169–206 (LRMP…TIDN), 208–244 (DIEK…EVTM), 245–282 (ATLS…LVED), and 288–326 (PFMD…VGAV). ADP contacts are provided by Thr395, His399, and Glu400. ABC transporter domains follow at residues 429–646 (DEGE…YYEL) and 672–998 (VKVS…KKDD). ADP contacts are provided by Asn708, Glu927, Asn930, and His956. The disordered stretch occupies residues 980-1050 (GHNWVQGQGS…DAYVSSDEEF (71 aa)). Residues 1013-1037 (AAKKKKKLSSAELRKKKKERMKKKK) show a composition bias toward basic residues.

It belongs to the ABC transporter superfamily. ABCF family. EF3 subfamily. In terms of assembly, monomer.

It localises to the cytoplasm. The catalysed reaction is ATP + H2O = ADP + phosphate + H(+). It functions in the pathway protein biosynthesis; polypeptide chain elongation. Functionally, ribosome-dependent ATPase that functions in cytoplasmic translation elongation. Required for the ATP-dependent release of deacylated tRNA from the ribosomal E-site during protein biosynthesis. Stimulates the eEF1A-dependent binding of aminoacyl-tRNA to the ribosomal A-site, which has reduced affinity for tRNA as long as the E-site is occupied. Assists translation termination by stimulating the release of nascent protein from the ribosome by release factors. This is Elongation factor 3 (CEF3) from Candida albicans (strain SC5314 / ATCC MYA-2876) (Yeast).